Consider the following 149-residue polypeptide: Ribonuclease H (149 aa).

Residues 1–142 (MSTITIHTDG…ADELAREGLA (142 aa)) form the RNase H type-1 domain. Positions 9, 47, 70, and 134 each coordinate Mg(2+). The tract at residues 124–149 (HAGDPGNERADELAREGLAEARGRQP) is disordered. The segment covering 129–149 (GNERADELAREGLAEARGRQP) has biased composition (basic and acidic residues).

The protein belongs to the RNase H family. In terms of assembly, monomer. It depends on Mg(2+) as a cofactor.

It localises to the cytoplasm. It carries out the reaction Endonucleolytic cleavage to 5'-phosphomonoester.. Endonuclease that specifically degrades the RNA of RNA-DNA hybrids. The polypeptide is Ribonuclease H (Maricaulis maris (strain MCS10) (Caulobacter maris)).